Here is a 331-residue protein sequence, read N- to C-terminus: UPF0194 membrane protein YbhG (331 aa).

Residues 1 to 19 (MKKPVVIGLAIAAIVAVIA) form the signal peptide. Residues 107 to 208 (EEIAQAAAAV…LDLQDTTLIA (102 aa)) are a coiled coil.

The protein belongs to the UPF0194 family.

It localises to the periplasm. The polypeptide is UPF0194 membrane protein YbhG (Salmonella paratyphi A (strain ATCC 9150 / SARB42)).